Consider the following 138-residue polypeptide: Cysteine desulfuration protein SufE (138 aa).

Cysteine 51 (cysteine persulfide intermediate) is an active-site residue.

The protein belongs to the SufE family. In terms of assembly, homodimer. Interacts with SufS.

It is found in the cytoplasm. It participates in cofactor biosynthesis; iron-sulfur cluster biosynthesis. In terms of biological role, participates in cysteine desulfuration mediated by SufS. Cysteine desulfuration mobilizes sulfur from L-cysteine to yield L-alanine and constitutes an essential step in sulfur metabolism for biosynthesis of a variety of sulfur-containing biomolecules. Functions as a sulfur acceptor for SufS, by mediating the direct transfer of the sulfur atom from the S-sulfanylcysteine of SufS, an intermediate product of cysteine desulfuration process. The polypeptide is Cysteine desulfuration protein SufE (Escherichia coli O8 (strain IAI1)).